We begin with the raw amino-acid sequence, 105 residues long: MGCCGCGGCGGRCSGGCGGGCGGGCGGGCGGGCGGCGGGCGSYTTCRYYRVGCCSSCCPCCRGCCGGCCSTPVICCCRRTCRSCGCGCGKSCCQQKCCCQKQCCC.

A 10 X 2 AA repeats of CG region spans residues Cys4–Gly41.

Belongs to the KRTAP type 28 family.

Functionally, in the hair cortex, hair keratin intermediate filaments are embedded in an interfilamentous matrix, consisting of hair keratin-associated proteins (KRTAP), which are essential for the formation of a rigid and resistant hair shaft through their extensive disulfide bond cross-linking with abundant cysteine residues of hair keratins. The matrix proteins include the high-sulfur and high-glycine-tyrosine keratins. This is Small cysteine and glycine repeat-containing protein 10 from Homo sapiens (Human).